The primary structure comprises 255 residues: MTFLALDVGNTRLKWAQYEAPAVGARLLAHGAVFLENIDRLAEEEWSEMSPPTRILGCIVAGDAIKRRVTEQMELWDVVPRWVVSSPQEAGLTNGYEHPARLGADRWVAMIGARHRLLARGISKPCIVVMVGTAVTVEAIDASGKFLGGIILPGHGIMLRALESGTAGLHVPTGEVRDFPTNTSDALTSGGTFAIAGAVQRMVENITRHCGEPPECIMTGGAGWKMAPSMSVKYELVDSLIFDGLLEIASRRFAP.

7–14 (DVGNTRLK) is a binding site for ATP. Substrate contacts are provided by residues Y96 and 103–106 (GADR). D105 serves as the catalytic Proton acceptor. Position 133 (T133) interacts with ATP. T183 serves as a coordination point for substrate.

The protein belongs to the type III pantothenate kinase family. As to quaternary structure, homodimer. NH4(+) serves as cofactor. Requires K(+) as cofactor.

The protein localises to the cytoplasm. The enzyme catalyses (R)-pantothenate + ATP = (R)-4'-phosphopantothenate + ADP + H(+). It participates in cofactor biosynthesis; coenzyme A biosynthesis; CoA from (R)-pantothenate: step 1/5. In terms of biological role, catalyzes the phosphorylation of pantothenate (Pan), the first step in CoA biosynthesis. The sequence is that of Type III pantothenate kinase from Polaromonas sp. (strain JS666 / ATCC BAA-500).